The chain runs to 423 residues: G-protein coupled receptor 83 (423 aa).

The first 17 residues, 1 to 17 (MKVPPVLLLFLLSSVRA), serve as a signal peptide directing secretion. Over 18-71 (TEQPQVVTEHPSMEAALTGPNASSHFWANYTFSDWQNFVGRRRYGAESQNPTVK) the chain is Extracellular. N38 and N46 each carry an N-linked (GlcNAc...) asparagine glycan. Residues 72–92 (ALLIVAYSFTIVFSLFGNVLV) traverse the membrane as a helical segment. Residues 93-107 (CHVIFKNQRMHSATS) are Cytoplasmic-facing. The helical transmembrane segment at 108-129 (LFIVNLAVADIMITLLNTPFTL) threads the bilayer. At 130–145 (VRFVNSTWVFGKGMCH) the chain is on the extracellular side. N-linked (GlcNAc...) asparagine glycosylation is present at N134. An intrachain disulfide couples C144 to C224. Residues 146–167 (VSRFAQYCSLHVSALTLTAIAV) traverse the membrane as a helical segment. At 168-186 (DRHQVIMHPLKPRISITKG) the chain is on the cytoplasmic side. The helical transmembrane segment at 187-208 (VIYIAVIWVMATFFSLPHAICQ) threads the bilayer. The Extracellular segment spans residues 209-238 (KLFTFKYSEDIVRSLCLPDFPEPADLFWKY). The chain crosses the membrane as a helical span at residues 239-260 (LDLATFILLYLLPLFIISVAYA). Residues 261–293 (RVAKKLWLCNTIGDVTTEQYLALRRKKKTTVKM) lie on the Cytoplasmic side of the membrane. A helical transmembrane segment spans residues 294 to 315 (LVLVVVLFALCWFPLNCYVLLL). Residues 316-327 (SSKAIHTNNALY) lie on the Extracellular side of the membrane. The helical transmembrane segment at 328–348 (FAFHWFAMSSTCYNPFIYCWL) threads the bilayer. Residues 349-423 (NENFRVELKA…SSVEPVVAMS (75 aa)) lie on the Cytoplasmic side of the membrane. Residues 389 to 423 (SHGRRAPLPNHHLPSSQIQSGKTDLSSVEPVVAMS) are disordered. Positions 401 to 414 (LPSSQIQSGKTDLS) are enriched in polar residues.

Belongs to the G-protein coupled receptor 1 family. In terms of tissue distribution, predominantly expressed in the brain, with moderate expression in the hypothalamus. Expressed in the thymus.

Its subcellular location is the cell membrane. Its function is as follows. G-protein coupled receptor for PEN, a neuropeptide produced from the precursor protein, proSAAS (encoded by PCSK1N). Acts through a G(i)- and G(q)-alpha-alpha-mediated pathway in response to PEN. Plays a role in food intake and body weight regulation. May contribute to the regulation of anxiety-related behaviors. The protein is G-protein coupled receptor 83 of Mus musculus (Mouse).